The primary structure comprises 376 residues: Multiphosphoryl transfer protein (376 aa).

One can recognise a PTS EIIA type-2 domain in the interval 2–142; that stretch reads FQLSVQDIHP…EELRALLMGE (141 aa). Catalysis depends on histidine 62, which acts as the Tele-phosphohistidine intermediate; for EIIA activity. Histidine 62 bears the Phosphohistidine; by HPr mark. Residues 156-284 form a m domain region; it reads TLDVIASSLV…LTSDDALTDD (129 aa). The HPr domain maps to 285-375; that stretch reads VLSAEFVVRN…DAIAAGLGEG (91 aa). Histidine 299 functions as the Pros-phosphohistidine intermediate; for HPr activity in the catalytic mechanism. At histidine 299 the chain carries Phosphohistidine; by EI.

Its subcellular location is the cytoplasm. In terms of biological role, the phosphoenolpyruvate-dependent sugar phosphotransferase system (sugar PTS), a major carbohydrate active transport system, catalyzes the phosphorylation of incoming sugar substrates concomitantly with their translocation across the cell membrane. The enzyme II FruAB PTS system is involved in fructose transport. The polypeptide is Multiphosphoryl transfer protein (fruB) (Salmonella typhi).